A 394-amino-acid polypeptide reads, in one-letter code: Elongation factor Tu 2 (394 aa).

One can recognise a tr-type G domain in the interval 10 to 204 (KPHVNVGTIG…ALDSYIPEPE (195 aa)). Residues 19–26 (GHVDHGKT) form a G1 region. 19-26 (GHVDHGKT) contributes to the GTP binding site. Thr-26 serves as a coordination point for Mg(2+). The segment at 60–64 (GITIS) is G2. The interval 81 to 84 (DCPG) is G3. Residues 81 to 85 (DCPGH) and 136 to 139 (NKCD) contribute to the GTP site. A G4 region spans residues 136–139 (NKCD). The interval 174 to 176 (SAL) is G5.

It belongs to the TRAFAC class translation factor GTPase superfamily. Classic translation factor GTPase family. EF-Tu/EF-1A subfamily. In terms of assembly, monomer.

The protein resides in the cytoplasm. The catalysed reaction is GTP + H2O = GDP + phosphate + H(+). Functionally, GTP hydrolase that promotes the GTP-dependent binding of aminoacyl-tRNA to the A-site of ribosomes during protein biosynthesis. This is Elongation factor Tu 2 from Photorhabdus laumondii subsp. laumondii (strain DSM 15139 / CIP 105565 / TT01) (Photorhabdus luminescens subsp. laumondii).